A 67-amino-acid polypeptide reads, in one-letter code: Small ribosomal subunit protein eS17 (67 aa).

This sequence belongs to the eukaryotic ribosomal protein eS17 family.

This is Small ribosomal subunit protein eS17 from Pyrococcus horikoshii (strain ATCC 700860 / DSM 12428 / JCM 9974 / NBRC 100139 / OT-3).